Here is a 177-residue protein sequence, read N- to C-terminus: tRNA-splicing endonuclease (177 aa).

Active-site residues include Tyr114, His123, and Lys154.

Belongs to the tRNA-intron endonuclease family. Archaeal short subfamily. Homotetramer; although the tetramer contains four active sites, only two participate in the cleavage. Therefore, it should be considered as a dimer of dimers.

The enzyme catalyses pretRNA = a 3'-half-tRNA molecule with a 5'-OH end + a 5'-half-tRNA molecule with a 2',3'-cyclic phosphate end + an intron with a 2',3'-cyclic phosphate and a 5'-hydroxyl terminus.. In terms of biological role, endonuclease that removes tRNA introns. Cleaves pre-tRNA at the 5'- and 3'-splice sites to release the intron. The products are an intron and two tRNA half-molecules bearing 2',3' cyclic phosphate and 5'-OH termini. Recognizes a pseudosymmetric substrate in which 2 bulged loops of 3 bases are separated by a stem of 4 bp. The polypeptide is tRNA-splicing endonuclease (Methanococcus maripaludis (strain DSM 14266 / JCM 13030 / NBRC 101832 / S2 / LL)).